Consider the following 119-residue polypeptide: NAD(P)H-quinone oxidoreductase subunit M (119 aa).

Belongs to the complex I NdhM subunit family. As to quaternary structure, NDH-1 can be composed of about 15 different subunits; different subcomplexes with different compositions have been identified which probably have different functions.

The protein resides in the cellular thylakoid membrane. The catalysed reaction is a plastoquinone + NADH + (n+1) H(+)(in) = a plastoquinol + NAD(+) + n H(+)(out). The enzyme catalyses a plastoquinone + NADPH + (n+1) H(+)(in) = a plastoquinol + NADP(+) + n H(+)(out). Functionally, NDH-1 shuttles electrons from an unknown electron donor, via FMN and iron-sulfur (Fe-S) centers, to quinones in the respiratory and/or the photosynthetic chain. The immediate electron acceptor for the enzyme in this species is believed to be plastoquinone. Couples the redox reaction to proton translocation, and thus conserves the redox energy in a proton gradient. Cyanobacterial NDH-1 also plays a role in inorganic carbon-concentration. The sequence is that of NAD(P)H-quinone oxidoreductase subunit M from Crocosphaera subtropica (strain ATCC 51142 / BH68) (Cyanothece sp. (strain ATCC 51142)).